A 164-amino-acid polypeptide reads, in one-letter code: 5-formyltetrahydrofolate cyclo-ligase (164 aa).

ATP is bound at residue 3–7; the sequence is KNALR. 2 residues coordinate substrate: Glu-50 and Glu-55. 115-123 is a binding site for ATP; that stretch reads RLGFGKGYY. Asp-124 is a Mg(2+) binding site. Residues Arg-125 and Trp-153 each contribute to the ATP site. Position 154 (Asp-154) interacts with Mg(2+).

Belongs to the 5-formyltetrahydrofolate cyclo-ligase family. In terms of assembly, monomer or homodimer. The cofactor is Mg(2+). Mn(2+) is required as a cofactor. Requires Ca(2+) as cofactor. Zn(2+) serves as cofactor. It depends on Fe(2+) as a cofactor. The cofactor is Co(2+). Cu(2+) is required as a cofactor.

Its subcellular location is the cytoplasm. It carries out the reaction (6S)-5-formyl-5,6,7,8-tetrahydrofolate + ATP = (6R)-5,10-methenyltetrahydrofolate + ADP + phosphate. Its function is as follows. Involved in folate metabolism. Catalyzes the irreversible conversion of 5-formyltetrahydrofolate (5-FTHF) to yield 5,10-methenyltetrahydrofolate. This is 5-formyltetrahydrofolate cyclo-ligase from Mycoplasma pneumoniae (strain ATCC 29342 / M129 / Subtype 1) (Mycoplasmoides pneumoniae).